Reading from the N-terminus, the 441-residue chain is Hexane cyclase gkaB (441 aa).

The signal sequence occupies residues 1-25 (MTKFLAGAAIVLAVAFGSFFSQSST). N-linked (GlcNAc...) asparagine glycosylation is found at Asn-77, Asn-153, Asn-184, and Asn-308.

Belongs to the Diels-Alderase family.

Its pathway is mycotoxin biosynthesis. Functionally, hexane cyclase; part of the gene cluster that mediates the biosynthesis of GKK1032, fungal natural products containing a macrocyclic para-cyclophane connected to a decahydrofluorene ring system that show potent antitumor activities. Within the pathway, gkaB functions synergistically with gkaX and gkaZ to form the cyclophane. The pathway begins with the PKS-NRPS gkaA which, with the help of the trans-enoyl reductase gkaC, synthesizes the polyketide-tyrosyl acyl thioester product which can be reductively off-loaded by the terminal reductase (R) domain in gkaA. The alpha/beta hydrolase gkaG is then required to catalyze the subsequent Knoevenagel condensation that affords the 3-pyrrolin-2-one ring, whereas the three proteins gkaB, gkaX and gkaZ then function synergistically to form the cyclophane. This Penicillium citrinum protein is Hexane cyclase gkaB.